The chain runs to 1905 residues: Alpha-2-macroglobulin (1905 aa).

The signal sequence occupies residues 1–21 (MNKQYFLSLFSTLAVALTLSG). The N-palmitoyl cysteine moiety is linked to residue Cys22. Cys22 carries S-diacylglycerol cysteine lipidation. Positions 1438–1441 (CTEQ) form a cross-link, isoglutamyl cysteine thioester (Cys-Gln).

Belongs to the protease inhibitor I39 (alpha-2-macroglobulin) family. Bacterial alpha-2-macroglobulin subfamily.

Its subcellular location is the cell membrane. Functionally, protects the bacterial cell from host peptidases. The chain is Alpha-2-macroglobulin from Pasteurella multocida (strain Pm70).